The following is a 153-amino-acid chain: D-erythrulose-4-phosphate isomerase 1 (153 aa).

Cysteine 69 acts as the Proton acceptor in catalysis.

Belongs to the LacAB/RpiB family.

The enzyme catalyses D-erythrulose 4-phosphate = D-erythrose 4-phosphate. The protein operates within carbohydrate metabolism; erythritol degradation. Its pathway is carbohydrate metabolism; D-threitol degradation. Its function is as follows. Catalyzes the isomerization of D-erythrulose-4P to D-erythrose-4P. Involved in the degradation pathways of erythritol and D-threitol, that allow M.smegmatis to grow on these compounds as the sole carbon source. This chain is D-erythrulose-4-phosphate isomerase 1, found in Mycolicibacterium smegmatis (strain ATCC 700084 / mc(2)155) (Mycobacterium smegmatis).